Consider the following 441-residue polypeptide: Arginine biosynthesis bifunctional protein ArgJ, mitochondrial (441 aa).

Residues threonine 177, lysine 204, threonine 215, glutamate 301, asparagine 436, and serine 441 each coordinate substrate. Threonine 215 functions as the Nucleophile in the catalytic mechanism.

The protein belongs to the ArgJ family. As to quaternary structure, heterodimer of an alpha and a beta chain. The alpha and beta chains are autoproteolytically processed from a single precursor protein within the mitochondrion.

The protein localises to the mitochondrion matrix. It carries out the reaction N(2)-acetyl-L-ornithine + L-glutamate = N-acetyl-L-glutamate + L-ornithine. The catalysed reaction is L-glutamate + acetyl-CoA = N-acetyl-L-glutamate + CoA + H(+). It functions in the pathway amino-acid biosynthesis; L-arginine biosynthesis; L-ornithine and N-acetyl-L-glutamate from L-glutamate and N(2)-acetyl-L-ornithine (cyclic): step 1/1. The protein operates within amino-acid biosynthesis; L-arginine biosynthesis; N(2)-acetyl-L-ornithine from L-glutamate: step 1/4. Its function is as follows. Catalyzes two activities which are involved in the cyclic version of arginine biosynthesis: the synthesis of acetylglutamate from glutamate and acetyl-CoA, and of ornithine by transacetylation between acetylornithine and glutamate. In Kluyveromyces lactis (strain ATCC 8585 / CBS 2359 / DSM 70799 / NBRC 1267 / NRRL Y-1140 / WM37) (Yeast), this protein is Arginine biosynthesis bifunctional protein ArgJ, mitochondrial.